A 502-amino-acid polypeptide reads, in one-letter code: L-ornithine N(5)-monooxygenase (502 aa).

The span at 1 to 10 shows a compositional bias: basic and acidic residues; the sequence is MEPVERKLEI. Residues 1–34 form a disordered region; it reads MEPVERKLEIGSRSYSKMPLTQQRSSGEPPRLKA. Residues 13–26 are compositionally biased toward polar residues; the sequence is RSYSKMPLTQQRSS. FAD contacts are provided by residues 83–91 and glutamine 102; that span reads ERQKQFAWH. A substrate-binding site is contributed by lysine 107. An FAD-binding site is contributed by valine 168. NADP(+) is bound by residues 254 to 257 and arginine 279; that span reads SGQS. Substrate contacts are provided by residues 293–296 and asparagine 323; that span reads NEVF. An NADP(+)-binding site is contributed by 323–325; the sequence is NYS. An FAD-binding site is contributed by 466 to 468; sequence SLL. Position 469 (serine 469) interacts with substrate.

It belongs to the lysine N(6)-hydroxylase/L-ornithine N(5)-oxygenase family. In terms of assembly, homotetramer. The cofactor is FAD.

It carries out the reaction L-ornithine + NADPH + O2 = N(5)-hydroxy-L-ornithine + NADP(+) + H2O. The catalysed reaction is L-ornithine + NADH + O2 = N(5)-hydroxy-L-ornithine + NAD(+) + H2O. It functions in the pathway siderophore biosynthesis. Its function is as follows. Catalyzes the conversion of L-ornithine to N(5)-hydroxyornithine, the first step in the biosynthesis of all hydroxamate-containing siderophores, such as deferriferrichrysin. The sequence is that of L-ornithine N(5)-monooxygenase from Aspergillus oryzae (strain ATCC 42149 / RIB 40) (Yellow koji mold).